A 324-amino-acid chain; its full sequence is MPALPIDQEFDCERFRADIRATAAAIGAPIAHRLTDTVLEAFRDNFAQGATLWKTTSQPGDQLSYRFFSRLKMDTVSRAIDAGLLDAAHPTLAVVDAWSSLYGGAPVQSGDFDAGRGMAKTWLYFGGLRPAEDILTVPALPASVQARLKDFLALGLAHVRFAAVDWRHHSANVYFRGKGPLDTVQFARIHALSGSTPPAAHVVEEVLAYMPEDYCVAITLDLHSGDIERVCFYALKVPKNALPRIPTRIARFLEVAPSHDVEECNVIGWSFGRSGDYVKAERSYTGNMAEILAGWNCFFHGEEGRDHDLRALHQHTESTMGGAR.

Residues Arg-160 and Glu-281 each contribute to the substrate site.

This sequence belongs to the aromatic prenyltransferase family. In terms of assembly, monomer.

It catalyses the reaction 3-(4-hydroxyphenyl)pyruvate + dimethylallyl diphosphate = 3-dimethylallyl-4-hydroxyphenylpyruvate + diphosphate. The protein operates within antibiotic biosynthesis. In terms of biological role, magnesium-independent aromatic prenyltransferase that catalyzes the irreversible transfer of a dimethylallyl group to 4-hydroxyphenylpyruvate to produce the ring A structure in the clorobiocin biosynthesis pathway. Clorobiocin is an aminocoumarin family antibiotic. The chain is 4-hydroxyphenylpyruvate 3-dimethylallyltransferase from Streptomyces roseochromogenus subsp. oscitans.